Reading from the N-terminus, the 333-residue chain is Salivary glue protein Sgs-3 (333 aa).

A signal peptide spans 1 to 23; it reads MKLTIATALVGILLIACAHVANG. The tract at residues 51–285 is disordered; the sequence is TCRPPTTTRC…ATARPTSKPC (235 aa). Over residues 60 to 73 the composition is skewed to pro residues; the sequence is CPPPTTTRCPPPTR. A compositionally biased stretch (low complexity) spans 74-88; it reads PAECTATTKRPTARP. The segment covering 89–277 has biased composition (basic residues); that stretch reads TTKRATTRRT…TKRATTKRAT (189 aa).

This is Salivary glue protein Sgs-3 (Sgs3) from Drosophila erecta (Fruit fly).